We begin with the raw amino-acid sequence, 146 residues long: uncharacterized protein (146 aa).

Residues 119–128 (AQADLEHEES) are compositionally biased toward basic and acidic residues. A disordered region spans residues 119 to 146 (AQADLEHEESASIDQDEMVAIETRKTKK).

This is an uncharacterized protein from Schizosaccharomyces pombe (strain 972 / ATCC 24843) (Fission yeast).